The primary structure comprises 156 residues: Small ribosomal subunit protein uS7c (156 aa).

Belongs to the universal ribosomal protein uS7 family. Part of the 30S ribosomal subunit.

Its subcellular location is the plastid. It localises to the chloroplast. Functionally, one of the primary rRNA binding proteins, it binds directly to 16S rRNA where it nucleates assembly of the head domain of the 30S subunit. The chain is Small ribosomal subunit protein uS7c (rps7) from Chlorella vulgaris (Green alga).